The sequence spans 92 residues: Large ribosomal subunit protein eL43 (92 aa).

The C4-type zinc finger occupies 39-60 (CSFCGKDSMKRAVVGIWSCKRC).

Belongs to the eukaryotic ribosomal protein eL43 family.

The protein is Large ribosomal subunit protein eL43 (RpL37A) of Drosophila melanogaster (Fruit fly).